A 522-amino-acid chain; its full sequence is Phosphatidylinositol 3,4,5-trisphosphate 3-phosphatase TPTE2 (522 aa).

Polar residues predominate over residues 1–11 (MNESPQTNEFK). The disordered stretch occupies residues 1–28 (MNESPQTNEFKGTTEEAPAKESPHTSEF). Basic and acidic residues predominate over residues 12 to 27 (GTTEEAPAKESPHTSE). The next 3 membrane-spanning stretches (helical) occupy residues 66–86 (IVHS…LVLL), 111–131 (ISLA…FVEG), and 146–166 (AIIV…IKLL). One can recognise a Phosphatase tensin-type domain in the interval 210 to 386 (RRYTRDGFDL…GYFAQVKHLY (177 aa)). C320 functions as the Phosphocysteine intermediate in the catalytic mechanism. The 130-residue stretch at 393–522 (RRILFIKRFI…FAVEILFGEK (130 aa)) folds into the C2 tensin-type domain.

In terms of tissue distribution, isoform 3 is expressed in testis, brain and stomach while isoform 4 seems to be testis-specific.

The protein resides in the endoplasmic reticulum membrane. It is found in the golgi apparatus membrane. The protein localises to the cytoplasm. The enzyme catalyses a 1,2-diacyl-sn-glycero-3-phospho-(1D-myo-inositol-3,4,5-trisphosphate) + H2O = a 1,2-diacyl-sn-glycero-3-phospho-(1D-myo-inositol-4,5-bisphosphate) + phosphate. In terms of biological role, acts as a lipid phosphatase, removing the phosphate in the D3 position of the inositol ring from phosphatidylinositol 3,4,5-trisphosphate. Functionally, shows no phosphoinositide phosphatase activity. The chain is Phosphatidylinositol 3,4,5-trisphosphate 3-phosphatase TPTE2 (TPTE2) from Homo sapiens (Human).